The following is a 279-amino-acid chain: Small ribosomal subunit protein uS2 (279 aa).

Belongs to the universal ribosomal protein uS2 family. Component of the small ribosomal subunit. Mature ribosomes consist of a small (40S) and a large (60S) subunit. The 40S subunit contains about 33 different proteins and 1 molecule of RNA (18S). The 60S subunit contains about 49 different proteins and 3 molecules of RNA (28S, 5.8S and 5S). Interacts with ribosomal protein S21.

The protein resides in the cytoplasm. Required for the assembly and/or stability of the 40S ribosomal subunit. Required for the processing of the 20S rRNA-precursor to mature 18S rRNA in a late step of the maturation of 40S ribosomal subunits. This Schistosoma japonicum (Blood fluke) protein is Small ribosomal subunit protein uS2.